The sequence spans 155 residues: Endoribonuclease YbeY (155 aa).

Zn(2+)-binding residues include His120, His124, and His130.

It belongs to the endoribonuclease YbeY family. It depends on Zn(2+) as a cofactor.

The protein localises to the cytoplasm. Functionally, single strand-specific metallo-endoribonuclease involved in late-stage 70S ribosome quality control and in maturation of the 3' terminus of the 16S rRNA. This chain is Endoribonuclease YbeY, found in Staphylococcus epidermidis (strain ATCC 35984 / DSM 28319 / BCRC 17069 / CCUG 31568 / BM 3577 / RP62A).